The following is a 157-amino-acid chain: Transmembrane protein 42 (157 aa).

4 helical membrane-spanning segments follow: residues 37–57, 67–87, 100–120, and 124–144; these read FWGVFNCLCAGAFGALAAAAA, IGLCVLGIVAMASANSLMWTF, IASVTVTFSNILCSAILGYLL, and CQEILWWGGVFLILCGLTLIH.

Its subcellular location is the membrane. This is Transmembrane protein 42 (Tmem42) from Mus musculus (Mouse).